The primary structure comprises 256 residues: Probable aquaporin TIP5-1 (256 aa).

Residue methionine 1 is modified to N-acetylmethionine. 5 helical membrane passes run 24–44 (CYVSEFISTFFFVLAAVGSVM), 57–77 (PFGVLIPAIANALALSSSVYI), 89–109 (AVTFAMAVAGRISVPTAMFYW), 144–164 (FGASVLEGVLAFVLVYTVFTA), and 171–191 (LPLAVGPIFIGFVAGANVLAA). An NPA 1 motif is present at residues 87-89 (NPA). Residues 200-202 (NPA) carry the NPA 2 motif. The chain crosses the membrane as a helical span at residues 222-242 (VGPLLGGATAALVYDNVVVPV). Serine 249 is modified (phosphoserine).

Belongs to the MIP/aquaporin (TC 1.A.8) family. TIP (TC 1.A.8.10) subfamily.

The protein resides in the membrane. Its function is as follows. Potential aquaporin, which may facilitate the transport of water and small neutral solutes across cell membranes. In Arabidopsis thaliana (Mouse-ear cress), this protein is Probable aquaporin TIP5-1 (TIP5-1).